The chain runs to 217 residues: Probable nicotinate-nucleotide adenylyltransferase (217 aa).

This sequence belongs to the NadD family.

The catalysed reaction is nicotinate beta-D-ribonucleotide + ATP + H(+) = deamido-NAD(+) + diphosphate. Its pathway is cofactor biosynthesis; NAD(+) biosynthesis; deamido-NAD(+) from nicotinate D-ribonucleotide: step 1/1. Functionally, catalyzes the reversible adenylation of nicotinate mononucleotide (NaMN) to nicotinic acid adenine dinucleotide (NaAD). The chain is Probable nicotinate-nucleotide adenylyltransferase from Moorella thermoacetica (strain ATCC 39073 / JCM 9320).